A 226-amino-acid chain; its full sequence is Ribonuclease 3 (226 aa).

Residues 6–128 enclose the RNase III domain; it reads INRLQRKLGY…LIGGVFLDSN (123 aa). Glutamate 41 contributes to the Mg(2+) binding site. Aspartate 45 is a catalytic residue. The Mg(2+) site is built by aspartate 114 and glutamate 117. Glutamate 117 is an active-site residue. The region spanning 155-225 is the DRBM domain; the sequence is DPKTRLQEYL…AEQALKKLEL (71 aa).

This sequence belongs to the ribonuclease III family. Homodimer. Mg(2+) serves as cofactor.

Its subcellular location is the cytoplasm. It catalyses the reaction Endonucleolytic cleavage to 5'-phosphomonoester.. In terms of biological role, digests double-stranded RNA. Involved in the processing of primary rRNA transcript to yield the immediate precursors to the large and small rRNAs (23S and 16S). Processes some mRNAs, and tRNAs when they are encoded in the rRNA operon. Processes pre-crRNA and tracrRNA of type II CRISPR loci if present in the organism. This is Ribonuclease 3 from Salmonella enteritidis PT4 (strain P125109).